Reading from the N-terminus, the 420-residue chain is Glutamyl-tRNA reductase (420 aa).

Residues 49 to 52 (TCNR), Ser107, 112 to 114 (EPQ), and Gln118 contribute to the substrate site. Cys50 serves as the catalytic Nucleophile. 187–192 (GAGETI) provides a ligand contact to NADP(+).

The protein belongs to the glutamyl-tRNA reductase family. Homodimer.

The catalysed reaction is (S)-4-amino-5-oxopentanoate + tRNA(Glu) + NADP(+) = L-glutamyl-tRNA(Glu) + NADPH + H(+). It participates in porphyrin-containing compound metabolism; protoporphyrin-IX biosynthesis; 5-aminolevulinate from L-glutamyl-tRNA(Glu): step 1/2. In terms of biological role, catalyzes the NADPH-dependent reduction of glutamyl-tRNA(Glu) to glutamate 1-semialdehyde (GSA). The chain is Glutamyl-tRNA reductase from Nitrosococcus oceani (strain ATCC 19707 / BCRC 17464 / JCM 30415 / NCIMB 11848 / C-107).